A 152-amino-acid polypeptide reads, in one-letter code: Deoxyuridine 5'-triphosphate nucleotidohydrolase (152 aa).

Substrate is bound by residues 71–73 (RSG), Asn84, 88–90 (LID), and Lys98.

The protein belongs to the dUTPase family. Mg(2+) serves as cofactor.

It carries out the reaction dUTP + H2O = dUMP + diphosphate + H(+). It functions in the pathway pyrimidine metabolism; dUMP biosynthesis; dUMP from dCTP (dUTP route): step 2/2. Functionally, this enzyme is involved in nucleotide metabolism: it produces dUMP, the immediate precursor of thymidine nucleotides and it decreases the intracellular concentration of dUTP so that uracil cannot be incorporated into DNA. The protein is Deoxyuridine 5'-triphosphate nucleotidohydrolase of Legionella pneumophila subsp. pneumophila (strain Philadelphia 1 / ATCC 33152 / DSM 7513).